Reading from the N-terminus, the 262-residue chain is 5'-nucleotidase SurE (262 aa).

Asp-9, Asp-10, Ser-40, and Asn-95 together coordinate a divalent metal cation.

This sequence belongs to the SurE nucleotidase family. The cofactor is a divalent metal cation.

It localises to the cytoplasm. It carries out the reaction a ribonucleoside 5'-phosphate + H2O = a ribonucleoside + phosphate. Functionally, nucleotidase that shows phosphatase activity on nucleoside 5'-monophosphates. This chain is 5'-nucleotidase SurE, found in Aliarcobacter butzleri (strain RM4018) (Arcobacter butzleri).